The following is a 104-amino-acid chain: MYAIVETAGRQYRVEEGKILYTEKQKDYSPGDEIVFDRVVFVRKDGEVLVGKPYVEGAKVVGKVLEHAKARKVKTVKYRPRKNSKVEKGHRQWYTAIKIEKIEL.

This sequence belongs to the bacterial ribosomal protein bL21 family. Part of the 50S ribosomal subunit. Contacts protein L20.

Functionally, this protein binds to 23S rRNA in the presence of protein L20. The protein is Large ribosomal subunit protein bL21 of Thermotoga petrophila (strain ATCC BAA-488 / DSM 13995 / JCM 10881 / RKU-1).